The sequence spans 340 residues: DNA-directed RNA polymerase subunit alpha (340 aa).

An alpha N-terminal domain (alpha-NTD) region spans residues 1 to 226 (MLIAQRPSLT…ELFGLARELN (226 aa)). The alpha C-terminal domain (alpha-CTD) stretch occupies residues 243 to 340 (LAADLALPIE…DAGFVETEQY (98 aa)).

It belongs to the RNA polymerase alpha chain family. As to quaternary structure, homodimer. The RNAP catalytic core consists of 2 alpha, 1 beta, 1 beta' and 1 omega subunit. When a sigma factor is associated with the core the holoenzyme is formed, which can initiate transcription.

The enzyme catalyses RNA(n) + a ribonucleoside 5'-triphosphate = RNA(n+1) + diphosphate. DNA-dependent RNA polymerase catalyzes the transcription of DNA into RNA using the four ribonucleoside triphosphates as substrates. The sequence is that of DNA-directed RNA polymerase subunit alpha from Streptomyces avermitilis (strain ATCC 31267 / DSM 46492 / JCM 5070 / NBRC 14893 / NCIMB 12804 / NRRL 8165 / MA-4680).